Here is a 520-residue protein sequence, read N- to C-terminus: Probable cytosol aminopeptidase (520 aa).

The Mn(2+) site is built by lysine 232 and aspartate 237. Lysine 244 is a catalytic residue. Mn(2+) is bound by residues aspartate 255, aspartate 314, and glutamate 316. Residue arginine 318 is part of the active site. The disordered stretch occupies residues 488–520 (KAKKSTAKKATTKKTTTRKTASKTKSTKSKARK).

The protein belongs to the peptidase M17 family. Mn(2+) is required as a cofactor.

Its subcellular location is the cytoplasm. It catalyses the reaction Release of an N-terminal amino acid, Xaa-|-Yaa-, in which Xaa is preferably Leu, but may be other amino acids including Pro although not Arg or Lys, and Yaa may be Pro. Amino acid amides and methyl esters are also readily hydrolyzed, but rates on arylamides are exceedingly low.. The catalysed reaction is Release of an N-terminal amino acid, preferentially leucine, but not glutamic or aspartic acids.. Presumably involved in the processing and regular turnover of intracellular proteins. Catalyzes the removal of unsubstituted N-terminal amino acids from various peptides. The protein is Probable cytosol aminopeptidase (pepA) of Metamycoplasma salivarium (Mycoplasma salivarium).